Here is a 676-residue protein sequence, read N- to C-terminus: Capsid vertex component 1 (676 aa).

A compositionally biased stretch (low complexity) spans 253-264 (HPVRPSSSRVAS). The disordered stretch occupies residues 253–308 (HPVRPSSSRVASGLLQSAKGHGAQTSNTDPINNGSFDGVLEPPGQGRFTGKKNNSS). A compositionally biased stretch (polar residues) spans 275–287 (AQTSNTDPINNGS).

Belongs to the herpesviridae CVC1 protein family. As to quaternary structure, interacts (via C-terminus) with capsid vertex component 2/CVC2.

The protein resides in the virion. It is found in the host nucleus. In terms of biological role, capsid vertex-specific component that plays a role during viral DNA encapsidation, assuring correct genome cleavage and presumably stabilizing capsids that contain full-length viral genomes. This is Capsid vertex component 1 from Varicella-zoster virus (strain Dumas) (HHV-3).